The sequence spans 804 residues: Leucine--tRNA ligase (804 aa).

The short motif at P40–H51 is the 'HIGH' region element. The 'KMSKS' region signature appears at K576 to S580. K579 provides a ligand contact to ATP.

It belongs to the class-I aminoacyl-tRNA synthetase family.

It localises to the cytoplasm. It catalyses the reaction tRNA(Leu) + L-leucine + ATP = L-leucyl-tRNA(Leu) + AMP + diphosphate. The polypeptide is Leucine--tRNA ligase (Staphylococcus saprophyticus subsp. saprophyticus (strain ATCC 15305 / DSM 20229 / NCIMB 8711 / NCTC 7292 / S-41)).